We begin with the raw amino-acid sequence, 494 residues long: Rho GTPase-activating protein 19 (494 aa).

The residue at position 2 (Ala-2) is an N-acetylalanine. Ser-7 and Ser-31 each carry phosphoserine. The region spanning 102-308 (MSLKRKEKGV…FMIKHSQKLF (207 aa)) is the Rho-GAP domain. Residues 399–451 (QSLTQTPGREPSTPRVQKRARSRSFSGLIKRKVLGSQMTSEKKNSSPAPESVA) are disordered. Phosphoserine occurs at positions 422, 438, and 470. Phosphothreonine is present on Thr-478.

GTPase activator for the Rho-type GTPases by converting them to an inactive GDP-bound state. This Mus musculus (Mouse) protein is Rho GTPase-activating protein 19 (Arhgap19).